We begin with the raw amino-acid sequence, 254 residues long: Alcohol dehydrogenase (254 aa).

10 to 33 (FVAGLGGIGLDTSREIVKSGPKNL) is a binding site for NAD(+). Ser138 contacts substrate. Tyr151 (proton acceptor) is an active-site residue.

Belongs to the short-chain dehydrogenases/reductases (SDR) family. In terms of assembly, homodimer.

It carries out the reaction a primary alcohol + NAD(+) = an aldehyde + NADH + H(+). The enzyme catalyses a secondary alcohol + NAD(+) = a ketone + NADH + H(+). This chain is Alcohol dehydrogenase (Adh), found in Drosophila differens (Fruit fly).